The primary structure comprises 439 residues: Trigger factor (439 aa).

Residues 158 to 233 (GDVINIEYTI…IKEVLKRTLM (76 aa)) form the PPIase FKBP-type domain. The segment at 410–439 (KEISADEPVEEQKEEEEKEEAGSENSENKE) is disordered. The span at 414-428 (ADEPVEEQKEEEEKE) shows a compositional bias: acidic residues.

The protein belongs to the FKBP-type PPIase family. Tig subfamily.

It localises to the cytoplasm. It catalyses the reaction [protein]-peptidylproline (omega=180) = [protein]-peptidylproline (omega=0). Functionally, involved in protein export. Acts as a chaperone by maintaining the newly synthesized protein in an open conformation. Functions as a peptidyl-prolyl cis-trans isomerase. This is Trigger factor from Kosmotoga olearia (strain ATCC BAA-1733 / DSM 21960 / TBF 19.5.1).